A 24-amino-acid chain; its full sequence is Waglerin-4 (24 aa).

A disulfide bridge connects residues C11 and C15.

The protein belongs to the waglerin family. As to quaternary structure, monomer. As to expression, expressed by the venom gland.

It is found in the secreted. Its function is as follows. Waglerin-2 selectively blocks the epsilon subunit of muscle nicotinic acetylcholine receptor (nAChR). Also has effects on rodent ionotropic GABA(A) receptors (GABR), since it potentiates I(GABA) in some neurons and depresses I(GABA) in others. In mice, it elicits tachypnea, ocular proptosis, rapid collapse and spasms, whereas no toxic effects on respiration and blood pressure are observed in rats. Functionally, waglerin-4 selectively blocks the epsilon subunit of muscle nicotinic acetylcholine receptor. It elicits tachypnea, ocular proptosis, rapid collapse and spasms in mice. It causes death by respiratory failure. The sequence is that of Waglerin-4 from Tropidolaemus wagleri (Wagler's pit viper).